Here is a 92-residue protein sequence, read N- to C-terminus: Putative transcription elongation factor S-II-like protein 81R (92 aa).

The segment at 51 to 91 (GTVKCPGCGSRRVHALQRQTRSADEPMTLFAMCSECGKRWT) adopts a TFIIS-type zinc-finger fold. Zn(2+)-binding residues include Cys-55, Cys-58, Cys-83, and Cys-86.

The sequence is that of Putative transcription elongation factor S-II-like protein 81R from Dryophytes versicolor (chameleon treefrog).